The chain runs to 335 residues: Syntaxin-18 (335 aa).

The Cytoplasmic portion of the chain corresponds to 1–309 (MAVDITLLFR…EDIREAIKNN (309 aa)). 2 stretches are compositionally biased toward basic and acidic residues: residues 168–182 (KLEPEPNTKTRESTS) and 192–208 (KDSEENPATEERPEKIL). Residues 168–226 (KLEPEPNTKTRESTSSEKVSQSPSKDSEENPATEERPEKILAETQPELGTWGDGKGEDE) form a disordered region. Residues 243–305 (IGEMNSLFDE…KEGNEDIREA (63 aa)) form the t-SNARE coiled-coil homology domain. The helical; Anchor for type IV membrane protein transmembrane segment at 310–330 (AGFRVWILFFLVMCSFSLLFL) threads the bilayer. The Vesicular segment spans residues 331-335 (DWYDS).

It belongs to the syntaxin family. Component of a SNARE complex consisting of STX18, USE1L, BNIP1/SEC20L, and SEC22B. RINT1/TIP20L and ZW10 are associated with the complex through interaction with BNIP1/SEC20L. Interacts directly with USE1L and BNIP1/SEC20L. In terms of tissue distribution, ubiquitous.

It localises to the endoplasmic reticulum membrane. The protein localises to the golgi apparatus membrane. Syntaxin that may be involved in targeting and fusion of Golgi-derived retrograde transport vesicles with the ER. This is Syntaxin-18 (STX18) from Homo sapiens (Human).